Here is a 303-residue protein sequence, read N- to C-terminus: Esterase (303 aa).

The Involved in the stabilization of the negatively charged intermediate by the formation of the oxyanion hole motif lies at 79-81; it reads HGG. Active-site residues include Ser-149 and Glu-244.

Belongs to the 'GDXG' lipolytic enzyme family.

It is found in the secreted. The protein is Esterase (est) of Acinetobacter venetianus (strain ATCC 31012 / DSM 23050 / BCRC 14357 / CCUG 45561 / CIP 110063 / KCTC 2702 / LMG 19082 / RAG-1).